We begin with the raw amino-acid sequence, 758 residues long: 5-methyltetrahydropteroyltriglutamate--homocysteine methyltransferase (758 aa).

Residues 15–18 and K114 contribute to the 5-methyltetrahydropteroyltri-L-glutamate site; that span reads RELK. L-homocysteine is bound by residues 433–435 and E486; that span reads IGS. Residues 433–435 and E486 contribute to the L-methionine site; that span reads IGS. 5-methyltetrahydropteroyltri-L-glutamate-binding positions include 517–518 and W563; that span reads RC. D601 contacts L-homocysteine. D601 contacts L-methionine. E607 is a binding site for 5-methyltetrahydropteroyltri-L-glutamate. H643, C645, and E667 together coordinate Zn(2+). H696 functions as the Proton donor in the catalytic mechanism. C728 contacts Zn(2+).

This sequence belongs to the vitamin-B12 independent methionine synthase family. Zn(2+) is required as a cofactor.

The enzyme catalyses 5-methyltetrahydropteroyltri-L-glutamate + L-homocysteine = tetrahydropteroyltri-L-glutamate + L-methionine. Its pathway is amino-acid biosynthesis; L-methionine biosynthesis via de novo pathway; L-methionine from L-homocysteine (MetE route): step 1/1. Catalyzes the transfer of a methyl group from 5-methyltetrahydrofolate to homocysteine resulting in methionine formation. This is 5-methyltetrahydropteroyltriglutamate--homocysteine methyltransferase from Syntrophotalea carbinolica (strain DSM 2380 / NBRC 103641 / GraBd1) (Pelobacter carbinolicus).